The primary structure comprises 458 residues: Phosphoglucosamine mutase (458 aa).

The active-site Phosphoserine intermediate is S106. The Mg(2+) site is built by S106, D247, D249, and D251. S106 carries the phosphoserine modification.

The protein belongs to the phosphohexose mutase family. It depends on Mg(2+) as a cofactor. Activated by phosphorylation.

The enzyme catalyses alpha-D-glucosamine 1-phosphate = D-glucosamine 6-phosphate. Functionally, catalyzes the conversion of glucosamine-6-phosphate to glucosamine-1-phosphate. This chain is Phosphoglucosamine mutase, found in Chlamydia felis (strain Fe/C-56) (Chlamydophila felis).